Here is a 423-residue protein sequence, read N- to C-terminus: Hemoglobinase (423 aa).

The signal sequence occupies residues 1–18 (MFYSIFFIHILRIVLVDC). Residues 19-29 (NEYSEENVDDR) constitute a propeptide that is removed on maturation. Catalysis depends on residues His-145 and Cys-186. The segment at 286–307 (RKKASTEHDEPPMKPKDSIPSR) is disordered. Residues 286-423 (RKKASTEHDE…INGVIRKVCG (138 aa)) constitute a propeptide that is removed on maturation. The span at 289–305 (ASTEHDEPPMKPKDSIP) shows a compositional bias: basic and acidic residues.

The protein belongs to the peptidase C13 family. Gut.

The enzyme catalyses Hydrolysis of proteins and small molecule substrates at -Asn-|-Xaa- bonds.. Functionally, this protease is used by the parasite for degradation of the host globin. This chain is Hemoglobinase (HAEM), found in Schistosoma japonicum (Blood fluke).